We begin with the raw amino-acid sequence, 196 residues long: Nucleoside triphosphate pyrophosphatase (196 aa).

The Proton acceptor role is filled by Asp-70.

The protein belongs to the Maf family. The cofactor is a divalent metal cation.

The protein localises to the cytoplasm. The catalysed reaction is a ribonucleoside 5'-triphosphate + H2O = a ribonucleoside 5'-phosphate + diphosphate + H(+). It catalyses the reaction a 2'-deoxyribonucleoside 5'-triphosphate + H2O = a 2'-deoxyribonucleoside 5'-phosphate + diphosphate + H(+). Nucleoside triphosphate pyrophosphatase. May have a dual role in cell division arrest and in preventing the incorporation of modified nucleotides into cellular nucleic acids. The polypeptide is Nucleoside triphosphate pyrophosphatase (Gloeothece citriformis (strain PCC 7424) (Cyanothece sp. (strain PCC 7424))).